The primary structure comprises 549 residues: Cobalt-dependent inorganic pyrophosphatase (549 aa).

2 consecutive CBS domains span residues 74-130 (EMDK…IWDS) and 252-310 (MTKD…VIQV). AMP contacts are provided by residues lysine 100, 116 to 119 (STSN), threonine 253, valine 258, and 278 to 280 (YSN).

Belongs to the PPase family. Homodimer. The cofactor is Co(2+). Mn(2+) is required as a cofactor. Requires Mg(2+) as cofactor.

The enzyme catalyses diphosphate + H2O = 2 phosphate + H(+). Its activity is regulated as follows. Inhibited by AMP and ADP with 25% and 35% of activity remaining, respectively, at saturating conditions. Activated 5-fold by diadenosine polyphosphates(Ap[n]A) with n&gt;2 (Ap3A, Ap4A, Ap5A, Ap6A) at saturating conditions. The polypeptide is Cobalt-dependent inorganic pyrophosphatase (Clostridium perfringens (strain 13 / Type A)).